Reading from the N-terminus, the 449-residue chain is Packaging protein 1 (449 aa).

Residues 1–78 (METRGRRPAA…PAKRGDMLDR (78 aa)) form a disordered region. 171-178 (GPTGCGKS) provides a ligand contact to ATP. The tract at residues 440 to 449 (RAYRARKTPK) is DNA-binding.

The protein belongs to the adenoviridae packaging protein 1 family. Homodimer. Part of a genome packaging complex composed of packaging proteins 1, 2 and 3; this complex specifically binds to the packaging sequence on the left end of viral genomic DNA and performs packaging of the viral genome. Interacts with protein 33K.

Its subcellular location is the virion. It is found in the host nucleus. The protein localises to the host nucleoplasm. It localises to the host nucleolus. Its function is as follows. Component of the packaging machinery which encapsidates the viral DNA into preformed capsids and transcriptional activator of the viral major late promoter (MLP). Binds, along with packaging proteins 2 and 3, to the specific packaging sequence on the left end of viral genomic DNA and displays ATPase activity thereby providing the power stroke of the packaging machinery. The activity of packaging protein IVa2 is stimulated by protein 33K which acts as a terminase. May be the protein that pumps DNA into the capsid powered by ATP hydrolysis. Specifically binds to the 5'-CG-3' nucleotides of the repeats making up the packaging sequence. Component of the DEF-A and DEF-B transcription factors that bind downstream elements of the major late promoter (MLP), and stimulate transcription from the MLP after initiation of viral DNA replication. DEF-A is a heterodimer packaging proteins 1 and 2 and DEF-B is a homodimer of packaging protein 1. In Human adenovirus C serotype 5 (HAdV-5), this protein is Packaging protein 1.